The chain runs to 76 residues: MMKFPVYIHSISGNSVFNNGFAVSISPFSVSKTTEGSGGSNTGLVFESNALSQTSSANQAQNVTYAIQELLSKLLA.

Belongs to the GerPA/GerPF family.

The sequence is that of Spore germination protein-like protein YdzR (ydzR) from Bacillus subtilis (strain 168).